A 746-amino-acid chain; its full sequence is Ferrienterobactin receptor (746 aa).

The signal sequence occupies residues 1-22 (MNKKIHSLALLVNLGIYGVAQA). The short motif at 34 to 41 (DTIVVTAA) is the TonB box element. A TBDR plug domain is found at 42–169 (EQNLQAPGVS…AGGVVNIITK (128 aa)). The segment at 76-96 (GVNLTGNSTSGQRGNNRQIDI) is disordered. Over residues 79–93 (LTGNSTSGQRGNNRQ) the composition is skewed to polar residues. The TBDR beta-barrel domain occupies 174–746 (EWHGSWDAYF…TWYMSVNTHF (573 aa)). The short motif at 729 to 746 (YTYNEPGRTWYMSVNTHF) is the TonB C-terminal box element.

This sequence belongs to the TonB-dependent receptor family.

The protein resides in the cell outer membrane. In terms of biological role, this protein is involved in the initial step of iron uptake by binding ferrienterobactin (Fe-ENT), an iron chelatin siderophore that allows E.coli to extract iron from the environment. FepA also acts as a receptor for colicins B and D. This chain is Ferrienterobactin receptor (fepA), found in Escherichia coli (strain K12).